The following is a 131-amino-acid chain: Large ribosomal subunit protein bL19 (131 aa).

Polar residues predominate over residues 1 to 11 (MEETMNNQEAP). The interval 1–20 (MEETMNNQEAPETSEEETVA) is disordered.

This sequence belongs to the bacterial ribosomal protein bL19 family.

This protein is located at the 30S-50S ribosomal subunit interface and may play a role in the structure and function of the aminoacyl-tRNA binding site. The polypeptide is Large ribosomal subunit protein bL19 (Dehalococcoides mccartyi (strain ATCC BAA-2100 / JCM 16839 / KCTC 5957 / BAV1)).